The following is a 162-amino-acid chain: 3-isopropylmalate dehydratase small subunit (162 aa).

This sequence belongs to the LeuD family. LeuD type 2 subfamily. As to quaternary structure, heterodimer of LeuC and LeuD.

The catalysed reaction is (2R,3S)-3-isopropylmalate = (2S)-2-isopropylmalate. It functions in the pathway amino-acid biosynthesis; L-leucine biosynthesis; L-leucine from 3-methyl-2-oxobutanoate: step 2/4. Functionally, catalyzes the isomerization between 2-isopropylmalate and 3-isopropylmalate, via the formation of 2-isopropylmaleate. This is 3-isopropylmalate dehydratase small subunit from Pyrobaculum neutrophilum (strain DSM 2338 / JCM 9278 / NBRC 100436 / V24Sta) (Thermoproteus neutrophilus).